Consider the following 156-residue polypeptide: Transcription antitermination protein NusB (156 aa).

This sequence belongs to the NusB family.

Functionally, involved in transcription antitermination. Required for transcription of ribosomal RNA (rRNA) genes. Binds specifically to the boxA antiterminator sequence of the ribosomal RNA (rrn) operons. In Syntrophotalea carbinolica (strain DSM 2380 / NBRC 103641 / GraBd1) (Pelobacter carbinolicus), this protein is Transcription antitermination protein NusB.